We begin with the raw amino-acid sequence, 218 residues long: DNA endonuclease I-CeuI (218 aa).

Residues glycine 65 and glutamate 66 each coordinate Mg(2+). The tract at residues 71–75 (ISTKK) is interaction with DNA. Aspartate 86 contacts Mg(2+). 3 interaction with DNA regions span residues 90-94 (NVTQH), 114-116 (RHK), and 191-199 (KQQGQSNEG).

The protein belongs to the LAGLIDADG endonuclease family. Homodimer. Mg(2+) serves as cofactor.

It localises to the plastid. It is found in the chloroplast. Functionally, endonuclease involved in intron homing. Recognizes a degenerate sequence of 17-19 bp to produce a staggered cut 5 bp downstream from the CeLSU.5 intron insertion site. This is DNA endonuclease I-CeuI from Chlamydomonas moewusii (Chlamydomonas eugametos).